We begin with the raw amino-acid sequence, 24 residues long: Brevinin-1Bd (24 aa).

C18 and C24 are joined by a disulfide.

In terms of tissue distribution, expressed by the skin glands.

It localises to the secreted. Functionally, antibacterial activity against Gram-positive bacterium S.aureus and Gram-negative bacterium E.coli. Has activity against C.albicans. The sequence is that of Brevinin-1Bd from Lithobates berlandieri (Rio Grande leopard frog).